Here is an 81-residue protein sequence, read N- to C-terminus: Small ribosomal subunit protein bS16 (81 aa).

The protein belongs to the bacterial ribosomal protein bS16 family.

This Agathobacter rectalis (strain ATCC 33656 / DSM 3377 / JCM 17463 / KCTC 5835 / VPI 0990) (Eubacterium rectale) protein is Small ribosomal subunit protein bS16.